A 960-amino-acid chain; its full sequence is Phosphoenolpyruvate carboxylase 1 (960 aa).

Phosphoserine is present on serine 7. Residues histidine 168 and lysine 596 contribute to the active site.

Belongs to the PEPCase type 1 family. In terms of assembly, homotetramer. Mg(2+) is required as a cofactor.

The protein localises to the cytoplasm. It carries out the reaction oxaloacetate + phosphate = phosphoenolpyruvate + hydrogencarbonate. The protein operates within photosynthesis; C3 acid pathway. By light-reversible phosphorylation. Through the carboxylation of phosphoenolpyruvate (PEP) it forms oxaloacetate, a four-carbon dicarboxylic acid source for the tricarboxylic acid cycle. In Sorghum bicolor (Sorghum), this protein is Phosphoenolpyruvate carboxylase 1 (PEPC).